The primary structure comprises 143 residues: Large ribosomal subunit protein eL28y (143 aa).

This sequence belongs to the eukaryotic ribosomal protein eL28 family.

The sequence is that of Large ribosomal subunit protein eL28y (RPL28C) from Arabidopsis thaliana (Mouse-ear cress).